The primary structure comprises 445 residues: Phosphoglucosamine mutase (445 aa).

The Phosphoserine intermediate role is filled by serine 102. The Mg(2+) site is built by serine 102, aspartate 241, aspartate 243, and aspartate 245. Serine 102 carries the post-translational modification Phosphoserine.

This sequence belongs to the phosphohexose mutase family. The cofactor is Mg(2+). In terms of processing, activated by phosphorylation.

It catalyses the reaction alpha-D-glucosamine 1-phosphate = D-glucosamine 6-phosphate. In terms of biological role, catalyzes the conversion of glucosamine-6-phosphate to glucosamine-1-phosphate. The sequence is that of Phosphoglucosamine mutase from Salmonella paratyphi A (strain ATCC 9150 / SARB42).